A 576-amino-acid polypeptide reads, in one-letter code: Sulfite reductase [NADPH] hemoprotein beta-component (576 aa).

Cys-435, Cys-441, Cys-480, and Cys-484 together coordinate [4Fe-4S] cluster. Position 484 (Cys-484) interacts with siroheme.

This sequence belongs to the nitrite and sulfite reductase 4Fe-4S domain family. As to quaternary structure, alpha(8)-beta(8). The alpha component is a flavoprotein, the beta component is a hemoprotein. It depends on siroheme as a cofactor. [4Fe-4S] cluster serves as cofactor.

The catalysed reaction is hydrogen sulfide + 3 NADP(+) + 3 H2O = sulfite + 3 NADPH + 4 H(+). It participates in sulfur metabolism; hydrogen sulfide biosynthesis; hydrogen sulfide from sulfite (NADPH route): step 1/1. In terms of biological role, component of the sulfite reductase complex that catalyzes the 6-electron reduction of sulfite to sulfide. This is one of several activities required for the biosynthesis of L-cysteine from sulfate. In Proteus mirabilis (strain HI4320), this protein is Sulfite reductase [NADPH] hemoprotein beta-component.